We begin with the raw amino-acid sequence, 201 residues long: U1 small nuclear ribonucleoprotein C (201 aa).

The Matrin-type zinc finger occupies 4–36; the sequence is YYCEYCDIYLTHSSPVGRRQHNQGRKHISAKIE. Residues 137-154 are compositionally biased toward low complexity; that stretch reads IQKPYNNFDNKNNNYNNK. The segment at 137–176 is disordered; the sequence is IQKPYNNFDNKNNNYNNKPITNSSYKNDKQDYRNNNENND.

Belongs to the U1 small nuclear ribonucleoprotein C family. In terms of assembly, U1 snRNP is composed of the 7 core Sm proteins B/B', D1, D2, D3, E, F and G that assemble in a heptameric protein ring on the Sm site of the small nuclear RNA to form the core snRNP, and at least 3 U1 snRNP-specific proteins U1-70K, U1-A and U1-C. U1-C interacts with U1 snRNA and the 5' splice-site region of the pre-mRNA.

The protein localises to the nucleus. Its function is as follows. Component of the spliceosomal U1 snRNP, which is essential for recognition of the pre-mRNA 5' splice-site and the subsequent assembly of the spliceosome. U1-C is directly involved in initial 5' splice-site recognition for both constitutive and regulated alternative splicing. The interaction with the 5' splice-site seems to precede base-pairing between the pre-mRNA and the U1 snRNA. Stimulates commitment or early (E) complex formation by stabilizing the base pairing of the 5' end of the U1 snRNA and the 5' splice-site region. This chain is U1 small nuclear ribonucleoprotein C, found in Plasmodium yoelii yoelii.